The following is a 63-amino-acid chain: Omega-conotoxin Eu1.6 (63 aa).

The N-terminal stretch at 1–21 (MGMRMMFTVFLLVVLATTVVS) is a signal peptide. Positions 22 to 47 (FTSDRAPDGRNAAAKAFGLITPTVRK) are excised as a propeptide. 2 disulfides stabilise this stretch: Cys49/Cys55 and Cys50/Cys63. The segment at 51–53 (SNP) is ser-Xaa-Pro motif, crucial for potent interaction with nAChR.

This sequence belongs to the conotoxin A superfamily. Expressed by the venom duct.

The protein resides in the secreted. Functionally, this amidated peptide potently and teversibly inhibits Cav2.2/CACNA1B. Steady-state inactivation is enhanced at hyperpolarized membrane potentials. Also shows a weak interaction at alpha-3-beta-4/ CHRNA3-CHRNB4 and alpha-7/CHRNA7 nAChRs subtypes. In vivo, exhibits a potent analgesic activity in rat partial sciatic nerve injury and chronic constriction injury models. The sequence is that of Omega-conotoxin Eu1.6 from Conus eburneus (Ivory cone).